A 257-amino-acid polypeptide reads, in one-letter code: Probable amino-acid ABC transporter ATP-binding protein HI_1078 (257 aa).

The ABC transporter domain maps to 4–244 (LKVSNIQKNF…PQHERTKQFL (241 aa)). Position 36-43 (36-43 (GPSGSGKT)) interacts with ATP.

The protein belongs to the ABC transporter superfamily.

It localises to the cell inner membrane. Probably part of a binding-protein-dependent transport system for an amino acid. Probably responsible for energy coupling to the transport system. This chain is Probable amino-acid ABC transporter ATP-binding protein HI_1078, found in Haemophilus influenzae (strain ATCC 51907 / DSM 11121 / KW20 / Rd).